A 1106-amino-acid chain; its full sequence is Carbamoyl phosphate synthase large chain (1106 aa).

Residues 1–402 form a carboxyphosphate synthetic domain region; that stretch reads MPRREDIRSV…SFQKALRSLE (402 aa). Positions 129, 169, 175, 176, 208, 210, 215, 241, 242, 243, 285, and 299 each coordinate ATP. Residues 133 to 328 enclose the ATP-grasp 1 domain; it reads KKAMEKIGVR…IAKIAALLSI (196 aa). Residues Gln285, Glu299, and Asn301 each coordinate Mg(2+). Mn(2+)-binding residues include Gln285, Glu299, and Asn301. An oligomerization domain region spans residues 403 to 582; it reads IDRYGFGSDG…YSSYDEEDES (180 aa). The tract at residues 583-964 is carbamoyl phosphate synthetic domain; the sequence is DVTNAKSVMI…AFLKSQYMAG (382 aa). The region spanning 707 to 898 is the ATP-grasp 2 domain; the sequence is VEVLEKLKLN…IVKYATRIMM (192 aa). ATP-binding residues include Arg743, Ser782, Leu784, Glu789, Gly814, Ile815, His816, Ser817, Gln857, and Glu869. Mg(2+)-binding residues include Gln857, Glu869, and Asn871. 3 residues coordinate Mn(2+): Gln857, Glu869, and Asn871. The region spanning 965–1106 is the MGS-like domain; sequence DELPSQGTVF…QEIHAMPKIL (142 aa). An allosteric domain region spans residues 965–1106; the sequence is DELPSQGTVF…QEIHAMPKIL (142 aa).

Belongs to the CarB family. Composed of two chains; the small (or glutamine) chain promotes the hydrolysis of glutamine to ammonia, which is used by the large (or ammonia) chain to synthesize carbamoyl phosphate. Tetramer of heterodimers (alpha,beta)4. Mg(2+) is required as a cofactor. Requires Mn(2+) as cofactor.

The enzyme catalyses hydrogencarbonate + L-glutamine + 2 ATP + H2O = carbamoyl phosphate + L-glutamate + 2 ADP + phosphate + 2 H(+). It carries out the reaction hydrogencarbonate + NH4(+) + 2 ATP = carbamoyl phosphate + 2 ADP + phosphate + 2 H(+). Its pathway is amino-acid biosynthesis; L-arginine biosynthesis; carbamoyl phosphate from bicarbonate: step 1/1. The protein operates within pyrimidine metabolism; UMP biosynthesis via de novo pathway; (S)-dihydroorotate from bicarbonate: step 1/3. Large subunit of the glutamine-dependent carbamoyl phosphate synthetase (CPSase). CPSase catalyzes the formation of carbamoyl phosphate from the ammonia moiety of glutamine, carbonate, and phosphate donated by ATP, constituting the first step of 2 biosynthetic pathways, one leading to arginine and/or urea and the other to pyrimidine nucleotides. The large subunit (synthetase) binds the substrates ammonia (free or transferred from glutamine from the small subunit), hydrogencarbonate and ATP and carries out an ATP-coupled ligase reaction, activating hydrogencarbonate by forming carboxy phosphate which reacts with ammonia to form carbamoyl phosphate. This Leptospira interrogans serogroup Icterohaemorrhagiae serovar copenhageni (strain Fiocruz L1-130) protein is Carbamoyl phosphate synthase large chain.